The following is a 498-amino-acid chain: Glutamate--tRNA ligase (498 aa).

The 'HIGH' region signature appears at 10–20 (PSPTGYFHIGG). Residues 252–256 (KLSKR) carry the 'KMSKS' region motif. Lys-255 contacts ATP.

The protein belongs to the class-I aminoacyl-tRNA synthetase family. Glutamate--tRNA ligase type 1 subfamily. In terms of assembly, monomer.

The protein resides in the cytoplasm. It catalyses the reaction tRNA(Glu) + L-glutamate + ATP = L-glutamyl-tRNA(Glu) + AMP + diphosphate. Its function is as follows. Catalyzes the attachment of glutamate to tRNA(Glu) in a two-step reaction: glutamate is first activated by ATP to form Glu-AMP and then transferred to the acceptor end of tRNA(Glu). The sequence is that of Glutamate--tRNA ligase from Mycoplasmoides gallisepticum (strain R(low / passage 15 / clone 2)) (Mycoplasma gallisepticum).